A 785-amino-acid polypeptide reads, in one-letter code: Endonuclease MutS2 (785 aa).

335 to 342 is a binding site for ATP; sequence GPNTGGKT. The Smr domain maps to 710–785; sequence LDLRGERYED…GNGVTIVEFK (76 aa).

This sequence belongs to the DNA mismatch repair MutS family. MutS2 subfamily. In terms of assembly, homodimer. Binds to stalled ribosomes, contacting rRNA.

Functionally, endonuclease that is involved in the suppression of homologous recombination and thus may have a key role in the control of bacterial genetic diversity. Its function is as follows. Acts as a ribosome collision sensor, splitting the ribosome into its 2 subunits. Detects stalled/collided 70S ribosomes which it binds and splits by an ATP-hydrolysis driven conformational change. Acts upstream of the ribosome quality control system (RQC), a ribosome-associated complex that mediates the extraction of incompletely synthesized nascent chains from stalled ribosomes and their subsequent degradation. Probably generates substrates for RQC. This chain is Endonuclease MutS2, found in Listeria monocytogenes serotype 4a (strain HCC23).